The following is a 340-amino-acid chain: Adenosine deaminase-like protein (340 aa).

Residues H14 and H16 each contribute to the Zn(2+) site. N(6)-methyl-AMP-binding positions include H16, N18, H68, 100 to 103 (TTPK), and G173. Residue H200 coordinates Zn(2+). E203, D278, and D279 together coordinate N(6)-methyl-AMP. The active-site Proton donor is the E203. D278 provides a ligand contact to Zn(2+).

It belongs to the metallo-dependent hydrolases superfamily. Adenosine and AMP deaminases family. Monomer. It depends on Zn(2+) as a cofactor.

It catalyses the reaction N(6)-methyl-AMP + H2O + H(+) = IMP + methylamine. In terms of biological role, catalyzes the hydrolysis of the free cytosolic methylated adenosine nucleotide N(6)-methyl-AMP (N6-mAMP) to produce inositol monophosphate (IMP) and methylamine. Is required for the catabolism of cytosolic N6-mAMP, which is derived from the degradation of mRNA containing N6-methylated adenine (m6A). The protein is Adenosine deaminase-like protein of Drosophila pseudoobscura pseudoobscura (Fruit fly).